The sequence spans 387 residues: Yellow-related salivary protein ASP2 (387 aa).

An N-terminal signal peptide occupies residues 1–18; that stretch reads MKIFLCLIVVVSLQGVLA.

The protein belongs to the major royal jelly protein family. As to expression, female salivary gland (at protein level).

Its subcellular location is the secreted. Probably modulates blood feeding of sand flies on vertebrate species by binding and sequestering different mediators involved in the host response. Binds biogenic amines. Binds octopamine with high affinity. Binds serotonin and dopamine with medium affinity. Poorly binds histamine. Does not bind noradrenaline and adrenaline. This is Yellow-related salivary protein ASP2 from Phlebotomus orientalis (Phlebotomine sand fly).